The following is a 152-amino-acid chain: UPF0756 membrane protein EF_1246 (152 aa).

4 helical membrane-spanning segments follow: residues Trp4–Ile24, Leu52–Leu72, Trp85–Ile105, and Leu115–Ile135.

This sequence belongs to the UPF0756 family.

It localises to the cell membrane. The polypeptide is UPF0756 membrane protein EF_1246 (Enterococcus faecalis (strain ATCC 700802 / V583)).